We begin with the raw amino-acid sequence, 166 residues long: Regulatory protein RecX (166 aa).

Belongs to the RecX family.

It localises to the cytoplasm. Modulates RecA activity. The sequence is that of Regulatory protein RecX from Salmonella paratyphi C (strain RKS4594).